Consider the following 589-residue polypeptide: Ufm1-specific protease (589 aa).

A disordered region spans residues 1 to 22; sequence MTNSQTVSLIGPTQMAPQSTPP. Active-site residues include Cys421, Asp545, and His547.

The protein belongs to the peptidase C78 family. As to quaternary structure, interacts with odr-4. In terms of tissue distribution, expressed in head and tail neurons. Expressed in the amphid head neurons ADL, ASI, ASH, ASJ, ASG, ADF, ASK, AWA, AWB, AWC, and in two tail neurons, the phasmid tail neurons PHA and PHB.

The protein localises to the endoplasmic reticulum membrane. The protein resides in the cytoplasm. It is found in the perinuclear region. In terms of biological role, thiol protease which recognizes and hydrolyzes the peptide bond at the C-terminal Gly of ufm-1, a ubiquitin-like modifier protein bound to a number of target proteins. Required, with oct-4, for the localization of a subset of 7 transmembrane domain odorant receptors, including odr-10, to the cilia of olfactory neurons AWA and AWC. Operates in aggregation behavior, and responses to oxygen levels. The sequence is that of Ufm1-specific protease from Caenorhabditis elegans.